A 203-amino-acid polypeptide reads, in one-letter code: MRTIDKRIAPNVRLAATLVARAPALTLAYDARCKSRLAATLDTGEDVALVLPRGTVLRDGDVLVADDGALVRVAAAHEAVLLVRAPDALTLTRAAYHLGNRHTPVEVGAGCLKLEYDPALADMLTRLGATVERASAPFQPEAGAYGGGHRHGHDATFAEDYALAQQVFDEHHGHSHSHSHSHSHDHDHQHGPSCSHGHHHGHR.

The interval 170-203 (EHHGHSHSHSHSHSHDHDHQHGPSCSHGHHHGHR) is disordered.

Belongs to the UreE family.

Its subcellular location is the cytoplasm. Involved in urease metallocenter assembly. Binds nickel. Probably functions as a nickel donor during metallocenter assembly. The sequence is that of Urease accessory protein UreE from Burkholderia mallei (strain SAVP1).